The primary structure comprises 361 residues: Fructose-bisphosphate aldolase (361 aa).

An N-acetylthreonine modification is found at threonine 2. Substrate contacts are provided by arginine 56 and lysine 147. The Proton acceptor role is filled by glutamate 188. Lysine 230 acts as the Schiff-base intermediate with dihydroxyacetone-P in catalysis.

The protein belongs to the class I fructose-bisphosphate aldolase family. As to quaternary structure, homotetramer. As to expression, mainly expressed in the heads and partly in the thoraxes of adult flies. Expressed in all adult tissues. The Alpha-beta mRNA shows strong expression in the abdomens of adults. In terms of tissue distribution, mainly expressed in adult abdominal regions and is also expressed in lesser amounts in other parts of the body. The Beta-gamma mRNA is expressed in adult heads.

It catalyses the reaction beta-D-fructose 1,6-bisphosphate = D-glyceraldehyde 3-phosphate + dihydroxyacetone phosphate. The protein operates within carbohydrate degradation; glycolysis; D-glyceraldehyde 3-phosphate and glycerone phosphate from D-glucose: step 4/4. In terms of biological role, enzyme of the glycolytic pathway. Glycolysis is essential in glial cells but not in neurons; neurons rely on the citric acid cycle for their energy needs, and on lactate and alanine secreted into the hemolymph by glial cells to fuel it. May take part in developmental stage-specific or tissue -specific sugar-phosphate metabolisms. Protein acts on two substrates fructose 1,6-bisphosphate and fructose 1-phosphate (like other class I aldolases). The polypeptide is Fructose-bisphosphate aldolase (Drosophila melanogaster (Fruit fly)).